The chain runs to 148 residues: Large ribosomal subunit protein bL9 (148 aa).

Belongs to the bacterial ribosomal protein bL9 family.

Its function is as follows. Binds to the 23S rRNA. This is Large ribosomal subunit protein bL9 from Syntrophotalea carbinolica (strain DSM 2380 / NBRC 103641 / GraBd1) (Pelobacter carbinolicus).